Consider the following 385-residue polypeptide: Interleukin-13 receptor subunit alpha-2 (385 aa).

The N-terminal stretch at 1 to 23 is a signal peptide; the sequence is MALMAVNTRCLCLFLLCTITGHS. Topologically, residues 24–336 are extracellular; sequence LEIKVNPPQD…WEGYTGPDSK (313 aa). Fibronectin type-III domains follow at residues 30-130, 133-221, and 236-334; these read PPQD…ADEG, GTKI…PIRS, and PPEF…TGPD. A disulfide bridge connects residues cysteine 61 and cysteine 109. A glycan (N-linked (GlcNAc...) asparagine) is linked at asparagine 111. A disulfide bond links cysteine 141 and cysteine 151. Asparagine 164 is a glycosylation site (N-linked (GlcNAc...) asparagine). Cysteine 180 and cysteine 193 form a disulfide bridge. Residues asparagine 211 and asparagine 295 are each glycosylated (N-linked (GlcNAc...) asparagine). Cysteine 265 and cysteine 312 form a disulfide bridge. The WSXWS motif signature appears at 318–322; that stretch reads WSEWS. Residues 337–357 form a helical membrane-spanning segment; it reads IVFIVPVCLFFIFLLLLLCLI. The Cytoplasmic segment spans residues 358–385; the sequence is VEKEDPEPTLSLHVDLNKEMYAYEETLC.

Belongs to the type I cytokine receptor family. Type 5 subfamily. Interacts with IL4RA. Interacts with high affinity to interleukin-13 (IL13), but not to interleukin-4 (IL4). Cleaved by MMP8 leading to a soluble form that is also able to interact with IL13.

The protein resides in the cell membrane. In terms of biological role, cell surface receptor that plays a role in the regulation of IL-13-mediated responses. Functions as a decoy receptor that inhibits IL-13- and IL-4-mediated signal transduction via the JAK-STAT pathway and thereby modulates immune responses and inflammation. Serves as a functional signaling receptor for IL-13 in an alternative pathway involving AP-1 ultimately leading to the production of TGFB1. In Rattus norvegicus (Rat), this protein is Interleukin-13 receptor subunit alpha-2 (Il13ra2).